The sequence spans 530 residues: PTS system maltose-specific EIICB component (530 aa).

Residues 1 to 431 form the PTS EIIC type-1 domain; the sequence is MTAKTAPKVT…FNLKTPGRDS (431 aa). 10 helical membrane-spanning segments follow: residues 22–42, 69–89, 96–116, 138–158, 189–209, 289–309, 321–341, 343–363, 369–389, and 399–419; these read FMLPVALLSFCGIMLGIGSSL, IGSFAFSFLPVMFCIAIPLGL, VAAFAGFIGYAVMNLAVNFWL, ILGIQSIDTGILGAVIAGIIV, LVMGLVGLVIPLVWPIFAMGI, FLSQGKMPAFLGGLPGAALAM, IKGLLISGLIACVVGGTTEPL, FLFLFVAPVLYVIHALLTGLG, VLGVTIGNTDGNIIDFVVFGI, and MVPVVAAIWFVVYYVIFRFAI. Residues 449–530 form the PTS EIIB type-1 domain; the sequence is GYNVPAILEA…MAGLMHTVQA (82 aa). The active-site Phosphocysteine intermediate; for EIIB activity is C471.

The protein resides in the cell inner membrane. The enzyme catalyses D-maltose(out) + N(pros)-phospho-L-histidyl-[protein] = alpha-maltose 6'-phosphate(in) + L-histidyl-[protein]. The phosphoenolpyruvate-dependent sugar phosphotransferase system (sugar PTS), a major carbohydrate active transport system, catalyzes the phosphorylation of incoming sugar substrates concomitantly with their translocation across the cell membrane. This system is involved in maltose transport. MalX can also recognize and transport glucose even though this sugar may not represent the natural substrate of the system. The chain is PTS system maltose-specific EIICB component from Escherichia coli (strain K12).